Reading from the N-terminus, the 555-residue chain is Glutamine--tRNA ligase (555 aa).

The 'HIGH' region motif lies at 34 to 44; the sequence is PEPNGYLHIGH. Residues 35–37 and 41–47 each bind ATP; these read EPN and HIGHAKS. L-glutamine is bound by residues Asp-67 and Tyr-212. Residues Thr-231, 261-262, and 269-271 contribute to the ATP site; these read RL and MSK. The short motif at 268–272 is the 'KMSKS' region element; the sequence is VMSKR. The interaction with tRNA stretch occupies residues 317–324; it reads TKQDNTIE.

Belongs to the class-I aminoacyl-tRNA synthetase family. As to quaternary structure, monomer.

It is found in the cytoplasm. The catalysed reaction is tRNA(Gln) + L-glutamine + ATP = L-glutaminyl-tRNA(Gln) + AMP + diphosphate. The sequence is that of Glutamine--tRNA ligase from Enterobacter sp. (strain 638).